The sequence spans 347 residues: Histidinol-phosphate aminotransferase (347 aa).

An N6-(pyridoxal phosphate)lysine modification is found at Lys209.

Belongs to the class-II pyridoxal-phosphate-dependent aminotransferase family. Histidinol-phosphate aminotransferase subfamily. Homodimer. Pyridoxal 5'-phosphate is required as a cofactor.

It catalyses the reaction L-histidinol phosphate + 2-oxoglutarate = 3-(imidazol-4-yl)-2-oxopropyl phosphate + L-glutamate. It functions in the pathway amino-acid biosynthesis; L-histidine biosynthesis; L-histidine from 5-phospho-alpha-D-ribose 1-diphosphate: step 7/9. This is Histidinol-phosphate aminotransferase from Geotalea uraniireducens (strain Rf4) (Geobacter uraniireducens).